We begin with the raw amino-acid sequence, 335 residues long: MNLINEKLDNLENNATKSPKEAVVLLNMGGPNSLYEVGVFLKNMFDDPFILTIKNNFMRKMVGKMIVNSRIEKSKKIYEKLGGKSPLTPITFALTERLNKLDPSRFYTYAMRYTPPYASMVLQDLALKEIESLVFFSMYPQYSSTTTLSSFNDAFNALKSLETFRPKVRVIERFYADKKLNEIILNTILNTLNNRKSQDFVLIFSVHGLPKSVIDAGDTYQQECEHHVSLLKELMQQKNIPFKEVLLSYQSKLGPMKWLEPSTEELIEKHRKSHIIIYPLAFTIDNSETLYELDMQYRLMAERLAIKEYLVCPCLNDSIEFAKFIIGLVKNLKSE.

Fe cation is bound by residues histidine 207 and glutamate 288.

Belongs to the ferrochelatase family.

It localises to the cytoplasm. The enzyme catalyses heme b + 2 H(+) = protoporphyrin IX + Fe(2+). It participates in porphyrin-containing compound metabolism; protoheme biosynthesis; protoheme from protoporphyrin-IX: step 1/1. Functionally, catalyzes the ferrous insertion into protoporphyrin IX. This is Ferrochelatase from Helicobacter pylori (strain HPAG1).